The primary structure comprises 298 residues: Lactose transport system permease protein LacF (298 aa).

6 helical membrane-spanning segments follow: residues 17-37, 77-97, 112-132, 151-171, 208-228, and 269-289; these read GWLFVAPAIALISVFMLYPIL, VIFFVVQVPIMITMALILAAM, MIFLPCVSSLVAYSILFKSMF, PIGWLTDPFWAKVLIIIAITW, AFLTIPMLKPVILFTTITSTI, and FSYAATVSYVIVLMVAVLSFL. In terms of domain architecture, ABC transmembrane type-1 spans 73 to 290; it reads LQNTVIFFVV…LMVAVLSFLQ (218 aa).

This sequence belongs to the binding-protein-dependent transport system permease family. MalFG subfamily.

The protein localises to the cell inner membrane. Part of the binding-protein-dependent transport system for lactose. Probably responsible for the translocation of the substrate across the membrane. The protein is Lactose transport system permease protein LacF (lacF) of Rhizobium radiobacter (Agrobacterium tumefaciens).